The following is a 249-amino-acid chain: Proteasome activator complex subunit 1 (249 aa).

The tract at residues 59 to 102 is disordered; that stretch reads APLDIPVPDPVKEKEKEERKKQQEKEEKEEKKKGDEDDKGPPCG. The span at 68 to 98 shows a compositional bias: basic and acidic residues; that stretch reads PVKEKEKEERKKQQEKEEKEEKKKGDEDDKG.

This sequence belongs to the PA28 family. Heterodimer of PSME1 and PSME2, which forms a hexameric ring. PSME1 can form homoheptamers.

Functionally, implicated in immunoproteasome assembly and required for efficient antigen processing. The PA28 activator complex enhances the generation of class I binding peptides by altering the cleavage pattern of the proteasome. The sequence is that of Proteasome activator complex subunit 1 (Psme1) from Mus musculus (Mouse).